Reading from the N-terminus, the 439-residue chain is DNA primase DnaG (439 aa).

Residues 169 to 243 enclose the Toprim domain; the sequence is DSIIVVEGRA…DIDYVARAPY (75 aa). Mg(2+) contacts are provided by Glu-175, Asp-217, and Asp-219.

It belongs to the archaeal DnaG primase family. In terms of assembly, forms a ternary complex with MCM helicase and DNA. Mg(2+) serves as cofactor.

The catalysed reaction is ssDNA + n NTP = ssDNA/pppN(pN)n-1 hybrid + (n-1) diphosphate.. Its function is as follows. RNA polymerase that catalyzes the synthesis of short RNA molecules used as primers for DNA polymerase during DNA replication. This is DNA primase DnaG from Methanococcus maripaludis (strain C7 / ATCC BAA-1331).